A 693-amino-acid chain; its full sequence is Polyribonucleotide nucleotidyltransferase (693 aa).

Positions 485 and 491 each coordinate Mg(2+). The KH domain maps to 552–611 (PRIETMQINTSKIATVIGPGGKQIRQIIERSGAQVDINDNGLINISANTQESIDKAKELI). The S1 motif domain maps to 621–689 (GKIYNGRVTS…EKGQLKLSHK (69 aa)).

Belongs to the polyribonucleotide nucleotidyltransferase family. Requires Mg(2+) as cofactor.

Its subcellular location is the cytoplasm. The catalysed reaction is RNA(n+1) + phosphate = RNA(n) + a ribonucleoside 5'-diphosphate. Its function is as follows. Involved in mRNA degradation. Catalyzes the phosphorolysis of single-stranded polyribonucleotides processively in the 3'- to 5'-direction. This Chlamydia muridarum (strain MoPn / Nigg) protein is Polyribonucleotide nucleotidyltransferase.